The primary structure comprises 57 residues: Small ribosomal subunit protein eS31 (57 aa).

Zn(2+) contacts are provided by Cys29, Cys32, Cys47, and Cys50. The C4-type zinc finger occupies 29 to 50 (CPRCGPGVFMANHKDRWSCGRC).

Belongs to the eukaryotic ribosomal protein eS31 family. Part of the 30S ribosomal subunit. The cofactor is Zn(2+).

The chain is Small ribosomal subunit protein eS31 from Thermococcus kodakarensis (strain ATCC BAA-918 / JCM 12380 / KOD1) (Pyrococcus kodakaraensis (strain KOD1)).